Consider the following 270-residue polypeptide: NAD(P)H-hydrate epimerase (270 aa).

A YjeF N-terminal domain is found at 25–234 (FQQLMDLMQN…DLLAPEAIYQ (210 aa)). (6S)-NADPHX is bound at residue 73–77 (DNGGQ). 2 residues coordinate K(+): N74 and D144. Residues 148–154 (GVGLYGH) and E177 contribute to the (6S)-NADPHX site. K(+) is bound at residue T180.

Belongs to the NnrE/AIBP family. K(+) serves as cofactor.

It catalyses the reaction (6R)-NADHX = (6S)-NADHX. The catalysed reaction is (6R)-NADPHX = (6S)-NADPHX. In terms of biological role, catalyzes the epimerization of the S- and R-forms of NAD(P)HX, a damaged form of NAD(P)H that is a result of enzymatic or heat-dependent hydration. This is a prerequisite for the S-specific NAD(P)H-hydrate dehydratase to allow the repair of both epimers of NAD(P)HX. The polypeptide is NAD(P)H-hydrate epimerase (Legionella pneumophila (strain Corby)).